A 79-amino-acid chain; its full sequence is ATP synthase subunit c (79 aa).

Transmembrane regions (helical) follow at residues 11-31 and 55-75; these read ISAA…IGIL and IVMG…LYLI.

It belongs to the ATPase C chain family. As to quaternary structure, F-type ATPases have 2 components, F(1) - the catalytic core - and F(0) - the membrane proton channel. F(1) has five subunits: alpha(3), beta(3), gamma(1), delta(1), epsilon(1). F(0) has three main subunits: a(1), b(2) and c(10-14). The alpha and beta chains form an alternating ring which encloses part of the gamma chain. F(1) is attached to F(0) by a central stalk formed by the gamma and epsilon chains, while a peripheral stalk is formed by the delta and b chains.

It is found in the cell membrane. Functionally, f(1)F(0) ATP synthase produces ATP from ADP in the presence of a proton or sodium gradient. F-type ATPases consist of two structural domains, F(1) containing the extramembraneous catalytic core and F(0) containing the membrane proton channel, linked together by a central stalk and a peripheral stalk. During catalysis, ATP synthesis in the catalytic domain of F(1) is coupled via a rotary mechanism of the central stalk subunits to proton translocation. Key component of the F(0) channel; it plays a direct role in translocation across the membrane. A homomeric c-ring of between 10-14 subunits forms the central stalk rotor element with the F(1) delta and epsilon subunits. In Wigglesworthia glossinidia brevipalpis, this protein is ATP synthase subunit c.